The chain runs to 306 residues: SDS degradation transcriptional activation protein (306 aa).

The region spanning 1 to 59 (MNDLRQLRHFVALAEHGHFARAAEAVNLSQPALSRSIQALENGLGCRLLDRGPRQVSLT) is the HTH lysR-type domain. A DNA-binding region (H-T-H motif) is located at residues 19 to 38 (FARAAEAVNLSQPALSRSIQ).

This sequence belongs to the LysR transcriptional regulatory family.

In terms of biological role, activates the transcription of the sdsA gene for sodium dodecyl sulfate (SDS) degradation. In Pseudomonas sp. (strain ATCC 19151), this protein is SDS degradation transcriptional activation protein (sdsB).